We begin with the raw amino-acid sequence, 309 residues long: Transcription initiation factor IIB 1 (309 aa).

A run of 2 repeats spans residues asparagine 125 to leucine 208 and aspartate 219 to glutamine 300.

It belongs to the TFIIB family.

In terms of biological role, stabilizes TBP binding to an archaeal box-A promoter. Also responsible for recruiting RNA polymerase II to the pre-initiation complex (DNA-TBP-TFIIB). The sequence is that of Transcription initiation factor IIB 1 from Saccharolobus solfataricus (strain ATCC 35092 / DSM 1617 / JCM 11322 / P2) (Sulfolobus solfataricus).